Here is a 282-residue protein sequence, read N- to C-terminus: MRALPIARSVSELRAVVDGWKAEGLRVGLVPTMGALHAGHLSLVRLALSKVDRVVASVFVNPTQFGPNEDFAAYPRDEAADAAKLGGAGAHLLYAPDVAGMYPPGFSTTITVSGVSSGLCGDLRPGHFQGVATVVAKLFLRVRPDVAVFGEKDYQQLLVLKRLVNDLDLAIEVIGAPIVRETDGLALSSRNAYLSAEQRALAPGLYRTLRRVGADILGGGRVDDCLAWGIDELKALGFGPVDYLDLRDGATLERLDDAPEGPGRLLCAAYLGKTRLIDNIGV.

33–40 (MGALHAGH) is an ATP binding site. Histidine 40 acts as the Proton donor in catalysis. Residue glutamine 64 participates in (R)-pantoate binding. Glutamine 64 contributes to the beta-alanine binding site. Residue 150 to 153 (GEKD) coordinates ATP. Glutamine 156 provides a ligand contact to (R)-pantoate. Residues valine 179 and 187–190 (LSSR) each bind ATP.

Belongs to the pantothenate synthetase family. In terms of assembly, homodimer.

The protein resides in the cytoplasm. It carries out the reaction (R)-pantoate + beta-alanine + ATP = (R)-pantothenate + AMP + diphosphate + H(+). It functions in the pathway cofactor biosynthesis; (R)-pantothenate biosynthesis; (R)-pantothenate from (R)-pantoate and beta-alanine: step 1/1. Catalyzes the condensation of pantoate with beta-alanine in an ATP-dependent reaction via a pantoyl-adenylate intermediate. This chain is Pantothenate synthetase, found in Rhodospirillum rubrum (strain ATCC 11170 / ATH 1.1.1 / DSM 467 / LMG 4362 / NCIMB 8255 / S1).